The primary structure comprises 173 residues: Gamma-crystallin S-2 (173 aa).

Beta/gamma crystallin 'Greek key' domains are found at residues 2–40 and 41–83; these read GKIIFYEDRNFQGRNYECSSDCADLSPYFSRCNSIRVES and DWWV…RVPT. Positions 84 to 88 are connecting peptide; it reads HTQRP. Beta/gamma crystallin 'Greek key' domains are found at residues 89 to 129 and 130 to 172; these read YRMR…HVMG and AYWI…RRIM.

This sequence belongs to the beta/gamma-crystallin family.

Its function is as follows. Crystallins are the dominant structural components of the vertebrate eye lens. The protein is Gamma-crystallin S-2 (GS-2) of Chiloscyllium indicum (Slender bamboo shark).